Consider the following 221-residue polypeptide: Eukaryotic translation initiation factor 3 subunit K (221 aa).

The PCI domain occupies 46–207 (YDLEANLACL…NIKTKHITEK (162 aa)).

It belongs to the eIF-3 subunit K family. Component of the eukaryotic translation initiation factor 3 (eIF-3) complex.

Its subcellular location is the cytoplasm. Component of the eukaryotic translation initiation factor 3 (eIF-3) complex, which is involved in protein synthesis of a specialized repertoire of mRNAs and, together with other initiation factors, stimulates binding of mRNA and methionyl-tRNAi to the 40S ribosome. The eIF-3 complex specifically targets and initiates translation of a subset of mRNAs involved in cell proliferation. The sequence is that of Eukaryotic translation initiation factor 3 subunit K from Culex quinquefasciatus (Southern house mosquito).